The following is a 639-amino-acid chain: 1-deoxy-D-xylulose-5-phosphate synthase 1 (639 aa).

Thiamine diphosphate-binding positions include histidine 79 and 120–122; that span reads AHS. Aspartate 155 lines the Mg(2+) pocket. Thiamine diphosphate is bound by residues 156-157, asparagine 184, tyrosine 293, and glutamate 373; that span reads GA. Asparagine 184 lines the Mg(2+) pocket.

The protein belongs to the transketolase family. DXPS subfamily. In terms of assembly, homodimer. Mg(2+) is required as a cofactor. Thiamine diphosphate serves as cofactor.

It catalyses the reaction D-glyceraldehyde 3-phosphate + pyruvate + H(+) = 1-deoxy-D-xylulose 5-phosphate + CO2. It functions in the pathway metabolic intermediate biosynthesis; 1-deoxy-D-xylulose 5-phosphate biosynthesis; 1-deoxy-D-xylulose 5-phosphate from D-glyceraldehyde 3-phosphate and pyruvate: step 1/1. Functionally, catalyzes the acyloin condensation reaction between C atoms 2 and 3 of pyruvate and glyceraldehyde 3-phosphate to yield 1-deoxy-D-xylulose-5-phosphate (DXP). The protein is 1-deoxy-D-xylulose-5-phosphate synthase 1 of Jannaschia sp. (strain CCS1).